We begin with the raw amino-acid sequence, 63 residues long: uncharacterized protein (63 aa).

Positions 1–21 are cleaved as a signal peptide; that stretch reads MYLSLLLILLAWTLWLGNSLA.

This is an uncharacterized protein from Haemophilus influenzae (strain ATCC 51907 / DSM 11121 / KW20 / Rd).